Consider the following 162-residue polypeptide: Circumsporozoite protein-related antigen (162 aa).

A signal peptide spans 1-16; it reads MKILSVFFLALFFIIF. 2 disordered regions span residues 24–44 and 109–162; these read KTNK…KGSG and PFKI…GPEH. The span at 114–130 shows a compositional bias: low complexity; sequence SSDPADNANPDADSESN. Positions 137–162 are enriched in polar residues; that stretch reads PQVTAQDVTPEQPQGDDNNLVSGPEH.

This chain is Circumsporozoite protein-related antigen, found in Plasmodium falciparum.